Consider the following 478-residue polypeptide: UDP-N-acetylmuramate--L-alanine ligase (478 aa).

126-132 lines the ATP pocket; sequence GTHGKTT.

The protein belongs to the MurCDEF family.

It localises to the cytoplasm. It catalyses the reaction UDP-N-acetyl-alpha-D-muramate + L-alanine + ATP = UDP-N-acetyl-alpha-D-muramoyl-L-alanine + ADP + phosphate + H(+). Its pathway is cell wall biogenesis; peptidoglycan biosynthesis. Functionally, cell wall formation. The polypeptide is UDP-N-acetylmuramate--L-alanine ligase (Mycolicibacterium vanbaalenii (strain DSM 7251 / JCM 13017 / BCRC 16820 / KCTC 9966 / NRRL B-24157 / PYR-1) (Mycobacterium vanbaalenii)).